A 425-amino-acid chain; its full sequence is RNA-binding protein L (425 aa).

Pro residues predominate over residues 1 to 20; it reads MQQPPSQPQPGMGGPPPPPQ. A disordered region spans residues 1-82; it reads MQQPPSQPQP…AAPPPQAMPA (82 aa). Over residues 21–31 the composition is skewed to low complexity; the sequence is GAAGQPPQWGA. A compositionally biased stretch (pro residues) spans 32–80; the sequence is IPPPMPPHQYGAPPPQQPPAMWGQPPPQAHYGQVPPPQPYYAAPPPQAM. RRM domains follow at residues 90 to 170, 180 to 259, and 284 to 356; these read KTLW…WASA, YTIF…PAAN, and TTIF…WGRS.

The protein belongs to the polyadenylate-binding RBP45 family. Interacts with RBP-P. Interacts with RAB5A.

It is found in the nucleus. Its subcellular location is the cytoplasm. Functionally, RNA-binding protein that binds to a cis-localization element or zipcode, within the 5'-CDS of prolamine RNA. Binds strongly to glutelin and prolamin mRNAs, particularly to 3'-UTR and zipcode RNA. Recognizes and binds to glutelin zipcode RNA, which is required for proper mRNA localization to cisternal endoplasmic reticulum. Recognizes and binds to prolamin zipcode RNA, which is required for proper mRNA localization to the protein body endoplasmic reticulum that delimits the prolamine intracisternal inclusion granules. Required for the correct localization of glutelin and prolamine mRNA in endosperm cells during grain development. RBP-L and RBP-P form a quaternary complex with the membrane trafficking factors NSF and RAB5A. This quaternay complex carries glutelin mRNAs for active transport on endosomes to the cortical endoplasmic reticulum membrane, and enables endosome-mediated glutelin mRNA transport in endosperm cells. This chain is RNA-binding protein L, found in Oryza sativa subsp. japonica (Rice).